Consider the following 553-residue polypeptide: Aminotransferase FUM8 (553 aa).

The signal sequence occupies residues 1–25 (MSPAPAILALRRVYNFCLLVDEAHG). N-linked (GlcNAc...) asparagine glycosylation occurs at Asn-480.

The protein belongs to the class-II pyridoxal-phosphate-dependent aminotransferase family. BioF subfamily. The cofactor is pyridoxal 5'-phosphate.

The protein resides in the endoplasmic reticulum. It functions in the pathway mycotoxin biosynthesis. Its function is as follows. Aminotransferase; part of the gene cluster that mediates the biosynthesis of fumonisins B1 (FB1), B2 (FB2), B3 (FB3), and B4 (FB4), which are carcinogenic mycotoxins. Within the pathway, FUM8 catalyzes the release of the C-18 polyketide chain from the highly reducing polyketide synthase FUM1 by a nucleophilic attack of a carbanion, which is derived from R-carbon of alanine by decarboxylation, on the carbonyl carbon of polyketide acyl chain. The biosynthesis starts with the FUM1-catalyzed carbon chain assembly from one molecule of acetyl-CoA, eight molecules of malonyl-CoA, and two molecules of methionine (in S-adenosyl form). The C18 polyketide chain is released from the enzyme by a nucleophilic attack of a carbanion, which is derived from R-carbon of alanine by decarboxylation, on the carbonyl carbon of polyketide acyl chain. This step is catalyzed by the pyridoxal 5'-phosphate-dependent aminoacyl transferase FUM8. The resultant 3-keto intermediate is then stereospecifically reduced to a 3-hydroxyl product by reductase FUM13. Subsequent oxidations at C-10 by the cytochrome P450 monooxygenase FUM2, C-14 and C-15 by FUM6, FUM12 or FUM15, tricarballylic esterification of the hydroxyl groups on C-14 and C-15 by acyltransferase FUM14, and C-5 hydroxylation by 2-keto-glutarate-dependent dioxygenase FUM3 furnish the biosynthesis of fumonisins. The tricarballylic moieties are most likely derived from the citric acid cycle, and their addition to the carbon backbone may involve FUM7, FUM10, FUM11 and FUM14. The chain is Aminotransferase FUM8 from Gibberella moniliformis (strain M3125 / FGSC 7600) (Maize ear and stalk rot fungus).